Consider the following 280-residue polypeptide: Acetylglutamate kinase (280 aa).

Substrate-binding positions include 64 to 65 (GG), Arg86, and Asn179.

It belongs to the acetylglutamate kinase family. ArgB subfamily.

The protein resides in the cytoplasm. The enzyme catalyses N-acetyl-L-glutamate + ATP = N-acetyl-L-glutamyl 5-phosphate + ADP. The protein operates within amino-acid biosynthesis; L-arginine biosynthesis; N(2)-acetyl-L-ornithine from L-glutamate: step 2/4. Its function is as follows. Catalyzes the ATP-dependent phosphorylation of N-acetyl-L-glutamate. The chain is Acetylglutamate kinase from Campylobacter fetus subsp. fetus (strain 82-40).